Consider the following 510-residue polypeptide: MVTIRADEISKIIRERIEQYNTEVKIVNTGTVLQVGDGIARIYGLDEVMAGELVEFEEGTIGIALNLESKNVGVVLMGDGLMIQEGSSVKATGRIAQIPVSEAYLSRVINALAKPIDGRGEILASESRLIESPAPGIISRRSVYEPLQTGLIAIDSMIPIGRGQRELIIGDRQTGKTAVATDTILNQQGQNVICVYVAVGQKASSVAQVVTTLQERGAMEYTIVVAETADSPATLQYLAPYTGAALAEYFMYRERHTLIIYDDLSKQAQAYRQMSLLLRRPPGREAYPGDVFYLHSRLLERAAKLSSQLGEGSMTALPIVETQSGDVSAYIPTNVISITDGQIFLSADLFNAGIRPAINVGISVSRVGSAAQIKAMKQVAGKLKLELAQFAELEAFAQFASDLDKATQNQLARGQRLRELLKQSQSAPLTVEEQIVTIYTGTNGYLDSLEIGQVRKFLVELRAYLKTNKPQFKEIISSTNTLTGEAEALLKDAIKEQMELFLFQEQVEKN.

170–177 (GDRQTGKT) is an ATP binding site.

Belongs to the ATPase alpha/beta chains family. In terms of assembly, F-type ATPases have 2 components, CF(1) - the catalytic core - and CF(0) - the membrane proton channel. CF(1) has five subunits: alpha(3), beta(3), gamma(1), delta(1), epsilon(1). CF(0) has four main subunits: a, b, b' and c.

The protein localises to the plastid. It is found in the chloroplast thylakoid membrane. The enzyme catalyses ATP + H2O + 4 H(+)(in) = ADP + phosphate + 5 H(+)(out). Produces ATP from ADP in the presence of a proton gradient across the membrane. The alpha chain is a regulatory subunit. This is ATP synthase subunit alpha, chloroplastic from Phaseolus vulgaris (Kidney bean).